Reading from the N-terminus, the 208-residue chain is MKVIEVKHPLIQHKIGLMREADISTKRFREIAREVGSLLTYEATKNLELETVKIQGWNGEVEVQQIKGKKATVVPILRAGLGMMDGVLEHMPSAKISVVGIYRDEKTLEPVPYFQKLVSNIDERLAIVVDPMLATGGSMISTIDLIKKAGCTRIVVLVLVAAPEGLKALEAAHPDLEVYTASIDDHLDEQGYIVPGLGDAGDKIFGTK.

Residues Arg-78, Arg-103, and 130–138 contribute to the 5-phospho-alpha-D-ribose 1-diphosphate site; that span reads DPMLATGGS. Uracil contacts are provided by residues Ile-193 and 198 to 200; that span reads GDA. Position 199 (Asp-199) interacts with 5-phospho-alpha-D-ribose 1-diphosphate.

It belongs to the UPRTase family. The cofactor is Mg(2+).

The enzyme catalyses UMP + diphosphate = 5-phospho-alpha-D-ribose 1-diphosphate + uracil. The protein operates within pyrimidine metabolism; UMP biosynthesis via salvage pathway; UMP from uracil: step 1/1. Its activity is regulated as follows. Allosterically activated by GTP. Its function is as follows. Catalyzes the conversion of uracil and 5-phospho-alpha-D-ribose 1-diphosphate (PRPP) to UMP and diphosphate. This is Uracil phosphoribosyltransferase from Psychromonas ingrahamii (strain DSM 17664 / CCUG 51855 / 37).